Here is a 236-residue protein sequence, read N- to C-terminus: Orotidine 5'-phosphate decarboxylase (236 aa).

Substrate-binding positions include Asp-14, Lys-36, 63-72, Thr-122, Arg-183, Gln-192, Gly-212, and Arg-213; that span reads DLKFHDIPNT. Lys-65 (proton donor) is an active-site residue.

It belongs to the OMP decarboxylase family. Type 1 subfamily. As to quaternary structure, homodimer.

It carries out the reaction orotidine 5'-phosphate + H(+) = UMP + CO2. It participates in pyrimidine metabolism; UMP biosynthesis via de novo pathway; UMP from orotate: step 2/2. Functionally, catalyzes the decarboxylation of orotidine 5'-monophosphate (OMP) to uridine 5'-monophosphate (UMP). The polypeptide is Orotidine 5'-phosphate decarboxylase (Chromohalobacter salexigens (strain ATCC BAA-138 / DSM 3043 / CIP 106854 / NCIMB 13768 / 1H11)).